A 178-amino-acid chain; its full sequence is Fatty-acid and retinol-binding protein 1 (178 aa).

The first 16 residues, 1-16, serve as a signal peptide directing secretion; sequence MYHRLILLALIGTTMA. Coiled coils occupy residues 67-89 and 130-153; these read DAAL…ELRN and KQAA…ELKV.

The protein belongs to the fatty-acid and retinol-binding protein (FARBP) family. Not glycosylated.

The protein resides in the secreted. Its function is as follows. Binds retinol and different fatty acids. This is Fatty-acid and retinol-binding protein 1 from Wuchereria bancrofti.